The following is a 180-amino-acid chain: MSDPLPSSFEDNPQFEEETGLQKFRRRLKEEPLIPLGCAATCYALYRAYRSMKAGDSVEMNRMFRARIYAQAFTLVAVVAGGMYFKTERQQRREFEKAVEERKSQEKRDAWLRELEIRDQEDRGWRERHAAMEAAANEAAKKAAVKPTAEQDAARSVIEAADQKSLGVLDAVMELMSRQK.

In terms of domain architecture, HIG1 spans 5-96 (LPSSFEDNPQ…TERQQRREFE (92 aa)). 2 consecutive transmembrane segments (helical) span residues 32–48 (PLIP…LYRA) and 68–85 (IYAQ…GMYF). Residues 88 to 108 (ERQQRREFEKAVEERKSQEKR) adopt a coiled-coil conformation.

It belongs to the RCF1 family. As to quaternary structure, associates with the respiratory chain complex III/complex IV supercomplex.

It localises to the mitochondrion membrane. Its function is as follows. Cytochrome c oxidase subunit which plays a role in assembly of respiratory supercomplexes. The chain is Respiratory supercomplex factor 1, mitochondrial (rcf1) from Aspergillus terreus (strain NIH 2624 / FGSC A1156).